The following is a 219-amino-acid chain: Large ribosomal subunit protein bL31m (219 aa).

2 stretches are compositionally biased toward basic and acidic residues: residues 169–181 (KKEE…KAAE) and 210–219 (KETRHYGKKK). 2 disordered regions span residues 169 to 188 (KKEE…ADPF) and 200 to 219 (TENM…GKKK).

Belongs to the bacterial ribosomal protein bL31 family. Highly divergent. Component of the mitochondrial large ribosomal subunit (mt-LSU). Mature N.crassa 74S mitochondrial ribosomes consist of a small (37S) and a large (54S) subunit. The 37S small subunit contains a 16S ribosomal RNA (16S mt-rRNA) and 32 different proteins. The 54S large subunit contains a 23S rRNA (23S mt-rRNA) and 42 different proteins. bL31m bridges the mt-LSU central protuberance and the mt-SSU head.

It localises to the mitochondrion. Its function is as follows. Component of the mitochondrial ribosome (mitoribosome), a dedicated translation machinery responsible for the synthesis of mitochondrial genome-encoded proteins, including at least some of the essential transmembrane subunits of the mitochondrial respiratory chain. The mitoribosomes are attached to the mitochondrial inner membrane and translation products are cotranslationally integrated into the membrane. This Neurospora crassa (strain ATCC 24698 / 74-OR23-1A / CBS 708.71 / DSM 1257 / FGSC 987) protein is Large ribosomal subunit protein bL31m (mrpl36).